The chain runs to 208 residues: Putative thymidylate kinase (208 aa).

The tract at residues 12–19 is defective ATP-binding; sequence GIDGTGTS.

This sequence belongs to the thymidylate kinase family.

The enzyme catalyses dTMP + ATP = dTDP + ADP. The protein is Putative thymidylate kinase (tmk) of Treponema pallidum (strain Nichols).